Reading from the N-terminus, the 371-residue chain is tRNA-specific 2-thiouridylase MnmA (371 aa).

ATP contacts are provided by residues 24 to 31 (AMSGGVDS) and Leu-50. Cys-119 (nucleophile) is an active-site residue. An intrachain disulfide couples Cys-119 to Cys-215. Residue Gly-143 participates in ATP binding. Residues 165–167 (KDQ) form an interaction with tRNA region. Residue Cys-215 is the Cysteine persulfide intermediate of the active site.

It belongs to the MnmA/TRMU family.

It is found in the cytoplasm. It carries out the reaction S-sulfanyl-L-cysteinyl-[protein] + uridine(34) in tRNA + AH2 + ATP = 2-thiouridine(34) in tRNA + L-cysteinyl-[protein] + A + AMP + diphosphate + H(+). Functionally, catalyzes the 2-thiolation of uridine at the wobble position (U34) of tRNA, leading to the formation of s(2)U34. The chain is tRNA-specific 2-thiouridylase MnmA from Neorickettsia sennetsu (strain ATCC VR-367 / Miyayama) (Ehrlichia sennetsu).